Here is a 281-residue protein sequence, read N- to C-terminus: Small ribosomal subunit protein uS2 (281 aa).

Residues 233-281 form a disordered region; that stretch reads NKAEGEAAEQPMAAWEKELLTNEAPAEASAEAAAPAAAEGETAEAPKAE. The span at 255–275 shows a compositional bias: low complexity; sequence EAPAEASAEAAAPAAAEGETA.

The protein belongs to the universal ribosomal protein uS2 family.

The protein is Small ribosomal subunit protein uS2 of Bifidobacterium longum (strain DJO10A).